The following is a 245-amino-acid chain: 2,3-bisphosphoglycerate-dependent phosphoglycerate mutase (245 aa).

Substrate is bound by residues R8–N15, T21–G22, R60, E87–Y90, K98, R114–R115, and G183–N184. The active-site Tele-phosphohistidine intermediate is the H9. Residue E87 is the Proton donor/acceptor of the active site.

It belongs to the phosphoglycerate mutase family. BPG-dependent PGAM subfamily.

It carries out the reaction (2R)-2-phosphoglycerate = (2R)-3-phosphoglycerate. It functions in the pathway carbohydrate degradation; glycolysis; pyruvate from D-glyceraldehyde 3-phosphate: step 3/5. Catalyzes the interconversion of 2-phosphoglycerate and 3-phosphoglycerate. The chain is 2,3-bisphosphoglycerate-dependent phosphoglycerate mutase from Bacillus thuringiensis subsp. konkukian (strain 97-27).